The primary structure comprises 561 residues: Probable xyloglucan galactosyltransferase GT20 (561 aa).

Residues 1-31 (MVSKRKSRTSKTIEDSCIHLCSVFFRFLYYT) are Cytoplasmic-facing. A helical; Signal-anchor for type II membrane protein membrane pass occupies residues 32–52 (LPALFLFFFLLYLCLSFTTGI). Residues 53 to 561 (SYNNFHMCIF…LLKKINRSVV (509 aa)) lie on the Lumenal side of the membrane. 6 N-linked (GlcNAc...) asparagine glycosylation sites follow: N87, N253, N277, N418, N421, and N557.

It belongs to the glycosyltransferase 47 family. In terms of tissue distribution, expressed in hydathodes.

The protein resides in the golgi apparatus membrane. Its function is as follows. Functions in xyloglucan synthesis by adding side chains to the xylosylated glucan backbone. Involved in the galactosylation of hemicellulose xyloglucan. The protein is Probable xyloglucan galactosyltransferase GT20 of Arabidopsis thaliana (Mouse-ear cress).